We begin with the raw amino-acid sequence, 477 residues long: Myosin-binding protein H (477 aa).

The segment at Met-1–Ala-73 is disordered. A phosphothreonine mark is found at Thr-6 and Thr-26. The region spanning Ala-73–Asn-168 is the Fibronectin type-III 1 domain. In terms of domain architecture, Ig-like C2-type 1 spans Pro-172–Asp-260. Residues Pro-269 to Ala-364 enclose the Fibronectin type-III 2 domain. Residues Pro-382 to Asp-466 enclose the Ig-like C2-type 2 domain.

Belongs to the immunoglobulin superfamily. MyBP family. Mainly expressed in the skeletal muscle. Slightly expressed in the left atrium and arteria mammaria interna.

Functionally, binds to myosin; probably involved in interaction with thick myofilaments in the A-band. This Homo sapiens (Human) protein is Myosin-binding protein H (MYBPH).